The chain runs to 325 residues: MSETATWQPSASIPNLLKRAAIMTEIRRFFADRGVLEVETPCMSQATVTDIHLFPFETRFVGPGHSQGMNLYLMTSPEYHMKRLLAAGCGPVFQLCRSFRNEEMGRHHNPEFTMLEWYRPHYDMYRLMNEVDDLLQQVLDCQPAESLSYQQAFQRHLEIDPLSADKTQLREAAAKLDLSNIADTEEDRDTLLQLLFTMGVEPHIGKEKPTFIYHFPASQASLAQISTEDHRVAERFEVYYKGIELANGFHELTDAREQQQRFEQDNRKRAARGLPQQPIDQNLLDALAAGLPDCSGVALGVDRLVMLALGAESLADVIAFTVDRA.

A substrate-binding site is contributed by 76–78 (SPE). ATP is bound by residues 100-102 (RNE) and Asn109. Substrate is bound at residue Tyr118. 244–245 (EL) contributes to the ATP binding site. Glu251 is a substrate binding site. Gly300 contributes to the ATP binding site.

The protein belongs to the class-II aminoacyl-tRNA synthetase family. EpmA subfamily. In terms of assembly, homodimer.

The enzyme catalyses D-beta-lysine + L-lysyl-[protein] + ATP = N(6)-((3R)-3,6-diaminohexanoyl)-L-lysyl-[protein] + AMP + diphosphate + H(+). With EpmB is involved in the beta-lysylation step of the post-translational modification of translation elongation factor P (EF-P) on 'Lys-34'. Catalyzes the ATP-dependent activation of (R)-beta-lysine produced by EpmB, forming a lysyl-adenylate, from which the beta-lysyl moiety is then transferred to the epsilon-amino group of EF-P 'Lys-34'. In Salmonella paratyphi A (strain ATCC 9150 / SARB42), this protein is Elongation factor P--(R)-beta-lysine ligase.